The following is a 364-amino-acid chain: 4-hydroxy-3-methylbut-2-en-1-yl diphosphate synthase (flavodoxin) (364 aa).

4 residues coordinate [4Fe-4S] cluster: Cys-268, Cys-271, Cys-303, and Glu-310.

The protein belongs to the IspG family. Requires [4Fe-4S] cluster as cofactor.

The catalysed reaction is (2E)-4-hydroxy-3-methylbut-2-enyl diphosphate + oxidized [flavodoxin] + H2O + 2 H(+) = 2-C-methyl-D-erythritol 2,4-cyclic diphosphate + reduced [flavodoxin]. It participates in isoprenoid biosynthesis; isopentenyl diphosphate biosynthesis via DXP pathway; isopentenyl diphosphate from 1-deoxy-D-xylulose 5-phosphate: step 5/6. Its function is as follows. Converts 2C-methyl-D-erythritol 2,4-cyclodiphosphate (ME-2,4cPP) into 1-hydroxy-2-methyl-2-(E)-butenyl 4-diphosphate. This chain is 4-hydroxy-3-methylbut-2-en-1-yl diphosphate synthase (flavodoxin), found in Anoxybacillus flavithermus (strain DSM 21510 / WK1).